The chain runs to 90 residues: Protein PRAC2 (90 aa).

As to expression, highly expressed in prostate and testis. Also detected in placenta, muscle, colon, peripheral blood leukocytes and skin.

It is found in the nucleus. The chain is Protein PRAC2 from Homo sapiens (Human).